A 478-amino-acid polypeptide reads, in one-letter code: Glutamine synthetase (478 aa).

Lysine 14 participates in a covalent cross-link: Isoglutamyl lysine isopeptide (Lys-Gln) (interchain with Q-Cter in protein Pup). The GS beta-grasp domain maps to 16 to 100 (ENVEYVDIRF…MNFFVHDPFT (85 aa)). In terms of domain architecture, GS catalytic spans 108 to 478 (PRNVARKAEN…PYEFSLYYDV (371 aa)). Residues glutamate 133 and glutamate 135 each coordinate Mg(2+). Residue glutamate 214 participates in ATP binding. Residues glutamate 219 and glutamate 227 each coordinate Mg(2+). 230 to 232 (YKF) serves as a coordination point for ATP. L-glutamate-binding positions include 271–272 (NG) and glycine 272. Histidine 276 serves as a coordination point for Mg(2+). Residues 278–280 (HQS) and serine 280 each bind ATP. Positions 329, 335, and 347 each coordinate L-glutamate. The ATP site is built by arginine 347, arginine 352, and lysine 361. Glutamate 366 contacts Mg(2+). Residue arginine 368 participates in L-glutamate binding. Tyrosine 406 carries the post-translational modification O-AMP-tyrosine.

The protein belongs to the glutamine synthetase family. In terms of assembly, oligomer of 12 subunits arranged in the form of two hexagons. Mg(2+) is required as a cofactor.

It localises to the cytoplasm. The catalysed reaction is L-glutamate + NH4(+) + ATP = L-glutamine + ADP + phosphate + H(+). With respect to regulation, when cellular nitrogen levels are high, the C-terminal adenylyl transferase (AT) of GlnE inhibits GlnA by covalent transfer of an adenylyl group from ATP to Tyr-406. Conversely, when nitrogen levels are low, the N-terminal adenylyl removase (AR) of GlnE activates GlnA by removing the adenylyl group by phosphorolysis. The fully adenylated enzyme complex is inactive. Its function is as follows. Involved in nitrogen metabolism via ammonium assimilation. Catalyzes the ATP-dependent biosynthesis of glutamine from glutamate and ammonia. The sequence is that of Glutamine synthetase from Mycolicibacterium smegmatis (strain ATCC 700084 / mc(2)155) (Mycobacterium smegmatis).